We begin with the raw amino-acid sequence, 216 residues long: Urease accessory protein UreG (216 aa).

25–32 (GPVGSGKT) contributes to the GTP binding site.

This sequence belongs to the SIMIBI class G3E GTPase family. UreG subfamily. Homodimer. UreD, UreF and UreG form a complex that acts as a GTP-hydrolysis-dependent molecular chaperone, activating the urease apoprotein by helping to assemble the nickel containing metallocenter of UreC. The UreE protein probably delivers the nickel.

Its subcellular location is the cytoplasm. Functionally, facilitates the functional incorporation of the urease nickel metallocenter. This process requires GTP hydrolysis, probably effectuated by UreG. In Burkholderia pseudomallei (strain 1710b), this protein is Urease accessory protein UreG.